We begin with the raw amino-acid sequence, 149 residues long: Large ribosomal subunit protein uL11 (149 aa).

Belongs to the universal ribosomal protein uL11 family. In terms of assembly, part of the ribosomal stalk of the 50S ribosomal subunit. Interacts with L10 and the large rRNA to form the base of the stalk. L10 forms an elongated spine to which L12 dimers bind in a sequential fashion forming a multimeric L10(L12)X complex. In terms of processing, one or more lysine residues are methylated.

In terms of biological role, forms part of the ribosomal stalk which helps the ribosome interact with GTP-bound translation factors. The protein is Large ribosomal subunit protein uL11 of Methylorubrum extorquens (strain CM4 / NCIMB 13688) (Methylobacterium extorquens).